The following is a 154-amino-acid chain: Prefoldin subunit 5 (154 aa).

An N-acetylalanine modification is found at Ala-2. Lys-42 carries the post-translational modification N6-acetyllysine. At Ser-56 the chain carries Phosphoserine.

Belongs to the prefoldin subunit alpha family. As to quaternary structure, heterohexamer of two PFD-alpha type and four PFD-beta type subunits.

The protein resides in the nucleus. Its function is as follows. Binds specifically to cytosolic chaperonin (c-CPN) and transfers target proteins to it. Binds to nascent polypeptide chain and promotes folding in an environment in which there are many competing pathways for nonnative proteins. Represses the transcriptional activity of MYC. This is Prefoldin subunit 5 (PFDN5) from Pongo abelii (Sumatran orangutan).